A 740-amino-acid polypeptide reads, in one-letter code: ATP-dependent RNA helicase DDX1 (740 aa).

Positions 1–295 (MAAFSEMGVM…APKALIVEPS (295 aa)) are necessary for interaction with HNRNPK. The tract at residues 1–448 (MAAFSEMGVM…DTVHHVVVPV (448 aa)) is interaction with dsRNA. A necessary for interaction with RELA region spans residues 1–525 (MAAFSEMGVM…KIDCDNLEQY (525 aa)). Residues 2 to 428 (AAFSEMGVMP…SEKIMHFPTW (427 aa)) form the Helicase ATP-binding domain. Residue 46–53 (AETGSGKT) participates in ATP binding. One can recognise a B30.2/SPRY domain in the interval 70–247 (DQQEGKKGKT…LKFNFGEEEF (178 aa)). An N6-acetyllysine mark is found at K239 and K268. N6-acetyllysine; alternate is present on K281. A Glycyl lysine isopeptide (Lys-Gly) (interchain with G-Cter in SUMO2); alternate cross-link involves residue K281. A DEAD box motif is present at residues 370 to 373 (DEAD). S481 carries the phosphoserine modification. In terms of domain architecture, Helicase C-terminal spans 493–681 (KGEYAVRAIK…QVEPDIKVPV (189 aa)). Residues 525 to 740 (YFMQQGGGPD…YLPNQLFRTF (216 aa)) are necessary for interaction with HNRNPK.

Belongs to the DEAD box helicase family. DDX1 subfamily. In terms of assembly, found in a multi-helicase-TICAM1 complex at least composed of DHX36, DDX1, DDX21 and TICAM1; this complex exists in resting cells with or without poly(I:C) RNA ligand stimulation. Interacts with DHX36. Interacts (via B30.2/SPRY domain) with DDX21 (via N-terminus); this interaction serves as bridges to TICAM1. Interacts with FAM98A (via N- and C-terminus). Interacts with MBNL1. Interacts with CSTF2. Interacts with HNRNPK. Interacts with ATM. Interacts with RELA (via C-terminus). Component of the tRNA-splicing ligase complex. Interacts with PHF5A (via C-terminus). Interacts with PQBP1. Interacts with ERCC6. Post-translationally, phosphorylated by ATM kinase; phosphorylation is increased in response to ionizing radiation (IR). As to expression, testis-specific. Expressed in the germ line stem cells, spermatogonia and spermatocytes of the testis. Also expressed in the seminoma and nonseminoma types of testicular germ cell tumors (TGCTs) (at protein level).

It localises to the nucleus. The protein resides in the cytoplasm. The protein localises to the cytosol. It is found in the cytoplasmic granule. Its subcellular location is the mitochondrion. The enzyme catalyses ATP + H2O = ADP + phosphate + H(+). Functionally, acts as an ATP-dependent RNA helicase, able to unwind both RNA-RNA and RNA-DNA duplexes. Possesses 5' single-stranded RNA overhang nuclease activity. Possesses ATPase activity on various RNA, but not DNA polynucleotides. May play a role in RNA clearance at DNA double-strand breaks (DSBs), thereby facilitating the template-guided repair of transcriptionally active regions of the genome. Together with RELA, acts as a coactivator to enhance NF-kappa-B-mediated transcriptional activation. Acts as a positive transcriptional regulator of cyclin CCND2 expression. Binds to the cyclin CCND2 promoter region. Associates with chromatin at the NF-kappa-B promoter region via association with RELA. Binds to poly(A) RNA. May be involved in 3'-end cleavage and polyadenylation of pre-mRNAs. Component of the tRNA-splicing ligase complex required to facilitate the enzymatic turnover of catalytic subunit RTCB: together with archease (ZBTB8OS), acts by facilitating the guanylylation of RTCB, a key intermediate step in tRNA ligation. Component of a multi-helicase-TICAM1 complex that acts as a cytoplasmic sensor of viral double-stranded RNA (dsRNA) and plays a role in the activation of a cascade of antiviral responses including the induction of pro-inflammatory cytokines via the adapter molecule TICAM1. Specifically binds (via helicase ATP-binding domain) on both short and long poly(I:C) dsRNA. The sequence is that of ATP-dependent RNA helicase DDX1 (Ddx1) from Mus musculus (Mouse).